The sequence spans 821 residues: Putative outer membrane usher protein YqiG (821 aa).

The N-terminal stretch at 1–20 is a signal peptide; it reads MSGNIGANPVIIIGCASAYA. C798 and C817 are disulfide-bonded.

This sequence belongs to the fimbrial export usher family.

The protein localises to the cell outer membrane. May be involved in H(2) production during fermentative growth. Involved in the export and assembly of a fimbrial subunit across the outer membrane. The chain is Putative outer membrane usher protein YqiG (yqiG) from Escherichia coli (strain K12).